The primary structure comprises 275 residues: Large ribosomal subunit protein uL2 (275 aa).

Residues 218–275 are disordered; that stretch reads RPQTRGSAMNPIDHPHGGGEGKTNSGRHPVSPWGMPTKGYKTRKKKASDKLIISKRKK. Residues 257–275 are compositionally biased toward basic residues; it reads YKTRKKKASDKLIISKRKK.

It belongs to the universal ribosomal protein uL2 family. As to quaternary structure, part of the 50S ribosomal subunit. Forms a bridge to the 30S subunit in the 70S ribosome.

Its function is as follows. One of the primary rRNA binding proteins. Required for association of the 30S and 50S subunits to form the 70S ribosome, for tRNA binding and peptide bond formation. It has been suggested to have peptidyltransferase activity; this is somewhat controversial. Makes several contacts with the 16S rRNA in the 70S ribosome. This Sulfurovum sp. (strain NBC37-1) protein is Large ribosomal subunit protein uL2.